We begin with the raw amino-acid sequence, 382 residues long: Sad1-interacting factor 2 (382 aa).

Position 135 is a phosphoserine (serine 135). A helical transmembrane segment spans residues 356 to 376 (EWIVVILMGLLVLIALFSIVV).

Belongs to the RMD1/sif2 family. In terms of assembly, interacts with sad1.

The protein localises to the nucleus membrane. Required for sporulation where it is believed to have a role in meiotic nuclear division. This is Sad1-interacting factor 2 (sif2) from Schizosaccharomyces pombe (strain 972 / ATCC 24843) (Fission yeast).